We begin with the raw amino-acid sequence, 181 residues long: 3-isopropylmalate dehydratase small subunit (181 aa).

It belongs to the LeuD family. LeuD type 2 subfamily. As to quaternary structure, heterodimer of LeuC and LeuD.

It carries out the reaction (2R,3S)-3-isopropylmalate = (2S)-2-isopropylmalate. It functions in the pathway amino-acid biosynthesis; L-leucine biosynthesis; L-leucine from 3-methyl-2-oxobutanoate: step 2/4. Its function is as follows. Catalyzes the isomerization between 2-isopropylmalate and 3-isopropylmalate, via the formation of 2-isopropylmaleate. The sequence is that of 3-isopropylmalate dehydratase small subunit from Deinococcus deserti (strain DSM 17065 / CIP 109153 / LMG 22923 / VCD115).